Consider the following 262-residue polypeptide: uncharacterized protein (262 aa).

Positions 1-22 are cleaved as a signal peptide; the sequence is MGYLKRFALYISVMILIFAIAG. Cysteine 23 carries the N-palmitoyl cysteine lipid modification. Residue cysteine 23 is the site of S-diacylglycerol cysteine attachment.

This sequence belongs to the staphylococcal tandem lipoprotein family.

The protein localises to the cell membrane. This is an uncharacterized protein from Staphylococcus aureus (strain NCTC 8325 / PS 47).